Reading from the N-terminus, the 258-residue chain is UPF0246 protein VP0504 (258 aa).

Belongs to the UPF0246 family.

The chain is UPF0246 protein VP0504 from Vibrio parahaemolyticus serotype O3:K6 (strain RIMD 2210633).